Here is a 715-residue protein sequence, read N- to C-terminus: 1,4-alpha-glucan branching enzyme GlgB (715 aa).

Catalysis depends on aspartate 399, which acts as the Nucleophile. Glutamate 452 serves as the catalytic Proton donor.

This sequence belongs to the glycosyl hydrolase 13 family. GlgB subfamily. As to quaternary structure, monomer.

It carries out the reaction Transfers a segment of a (1-&gt;4)-alpha-D-glucan chain to a primary hydroxy group in a similar glucan chain.. It participates in glycan biosynthesis; glycogen biosynthesis. Functionally, catalyzes the formation of the alpha-1,6-glucosidic linkages in glycogen by scission of a 1,4-alpha-linked oligosaccharide from growing alpha-1,4-glucan chains and the subsequent attachment of the oligosaccharide to the alpha-1,6 position. This Rhodopseudomonas palustris (strain BisA53) protein is 1,4-alpha-glucan branching enzyme GlgB.